Consider the following 199-residue polypeptide: MARTWLLLLLGVRCQALPSGIAGTPFPSLAPPITLLVDGRQHMLVVCLVLDAAPPGLDNPVWFSAGNGSALDAFTYGPSLAPDGTWTSLAQLSLPSEELEAWEPLVCHTRPGAGGQNRSTHPLQLSGESSTARSCFPEPLGGTQRQVLWLSLLRLLLFKLLLLDVLLTCSHLRLHVLAGQHLQPPPSRKSLPPTHRIWT.

The first 16 residues, 1-16 (MARTWLLLLLGVRCQA), serve as a signal peptide directing secretion. The Extracellular portion of the chain corresponds to 17 to 146 (LPSGIAGTPF…PEPLGGTQRQ (130 aa)). Cysteines 47 and 107 form a disulfide. Residues N67 and N117 are each glycosylated (N-linked (GlcNAc...) asparagine). A helical membrane pass occupies residues 147–167 (VLWLSLLRLLLFKLLLLDVLL). Residues 168 to 199 (TCSHLRLHVLAGQHLQPPPSRKSLPPTHRIWT) lie on the Cytoplasmic side of the membrane.

As to quaternary structure, heterodimer with TCRB; disulfide linked. This heterodimer assembles with CD3 proteins into a signaling-competent pre-T-cell receptor complex. Interacts with RHBDD1. As to expression, isoform 1 is expressed at higher levels than isoform 2 in the thymus while only isoform 2 is expressed in polyclonal beta-only cells. Isoform 1 shows a predominant expression in immature thymocytes.

It is found in the membrane. The protein resides in the cell membrane. Functionally, component of the pre-T-cell receptor complex (composed of PTCRA, TCRB and the CD3 complex) that plays a crucial role in early T-cell development, particularly alpha-beta T cell differentiation. Isoform 1 acts to retain most TCRB intracellularly, while isoform 2 permits higher levels of cell surface TCRB expression and facilitates signaling from the CD3-TCRB complex. In Mus musculus (Mouse), this protein is Pre T-cell antigen receptor alpha.